Here is a 430-residue protein sequence, read N- to C-terminus: UDP-N-acetylglucosamine 1-carboxyvinyltransferase (430 aa).

Phosphoenolpyruvate is bound at residue 22–23 (KN). Arginine 102 is a UDP-N-acetyl-alpha-D-glucosamine binding site. Cysteine 126 serves as the catalytic Proton donor. Cysteine 126 is modified (2-(S-cysteinyl)pyruvic acid O-phosphothioketal). Residues 131–135 (RPVDL), 172–175 (KVSV), aspartate 317, and isoleucine 339 contribute to the UDP-N-acetyl-alpha-D-glucosamine site.

This sequence belongs to the EPSP synthase family. MurA subfamily.

The protein resides in the cytoplasm. The catalysed reaction is phosphoenolpyruvate + UDP-N-acetyl-alpha-D-glucosamine = UDP-N-acetyl-3-O-(1-carboxyvinyl)-alpha-D-glucosamine + phosphate. The protein operates within cell wall biogenesis; peptidoglycan biosynthesis. Cell wall formation. Adds enolpyruvyl to UDP-N-acetylglucosamine. The chain is UDP-N-acetylglucosamine 1-carboxyvinyltransferase from Rhizobium leguminosarum bv. trifolii (strain WSM2304).